Consider the following 49-residue polypeptide: Small integral membrane protein 27 (49 aa).

A helical transmembrane segment spans residues 11–31 (WTYSLLLLAIVLLSWGFVIYA).

The protein localises to the membrane. This is Small integral membrane protein 27 from Mus musculus (Mouse).